Reading from the N-terminus, the 344-residue chain is N-acetyl-gamma-glutamyl-phosphate reductase (344 aa).

Cys148 is an active-site residue.

It belongs to the NAGSA dehydrogenase family. Type 1 subfamily.

The protein localises to the cytoplasm. It carries out the reaction N-acetyl-L-glutamate 5-semialdehyde + phosphate + NADP(+) = N-acetyl-L-glutamyl 5-phosphate + NADPH + H(+). Its pathway is amino-acid biosynthesis; L-arginine biosynthesis; N(2)-acetyl-L-ornithine from L-glutamate: step 3/4. Catalyzes the NADPH-dependent reduction of N-acetyl-5-glutamyl phosphate to yield N-acetyl-L-glutamate 5-semialdehyde. In Clostridium beijerinckii (strain ATCC 51743 / NCIMB 8052) (Clostridium acetobutylicum), this protein is N-acetyl-gamma-glutamyl-phosphate reductase.